A 247-amino-acid chain; its full sequence is Neurotrophic factor BDNF precursor form (247 aa).

Positions 1-18 (MTILFLTMVISYFGCMKA) are cleaved as a signal peptide. Positions 19 to 128 (APMKEANIRG…AANMSMRVRR (110 aa)) are excised as a propeptide. N-linked (GlcNAc...) asparagine glycosylation occurs at N121. 3 cysteine pairs are disulfide-bonded: C141–C208, C186–C237, and C196–C239.

Belongs to the NGF-beta family. As to quaternary structure, monomers and homodimers. Binds to NTRK2/TRKB. Can form heterodimers with other neurotrophin family members, such as NTF3 and NTF4 (in vitro), but the physiological relevance of this is not clear. BDNF precursor form: interacts with the heterodimer formed by NGFR and SORCS2. In terms of processing, N-glycosylated and glycosulfated, contrary to mature BDNF. Post-translationally, mature BDNF is produced by proteolytic removal of the propeptide, catalyzed by a FURIN family member. In addition, the precursor form is proteolytically cleaved within the propeptide, but this is not an obligatory intermediate for the production of mature BDNF. Can be converted into mature BDNF by plasmin (PLG). Detected in blood plasma and in saliva (at protein level). Brain. Highly expressed in hippocampus, amygdala, cerebral cortex and cerebellum. Also expressed in heart, lung, skeletal muscle, testis, prostate and placenta.

The protein localises to the secreted. In terms of biological role, important signaling molecule that activates signaling cascades downstream of NTRK2. During development, promotes the survival and differentiation of selected neuronal populations of the peripheral and central nervous systems. Participates in axonal growth, pathfinding and in the modulation of dendritic growth and morphology. Major regulator of synaptic transmission and plasticity at adult synapses in many regions of the CNS. The versatility of BDNF is emphasized by its contribution to a range of adaptive neuronal responses including long-term potentiation (LTP), long-term depression (LTD), certain forms of short-term synaptic plasticity, as well as homeostatic regulation of intrinsic neuronal excitability. Its function is as follows. Important signaling molecule that activates signaling cascades downstream of NTRK2. Activates signaling cascades via the heterodimeric receptor formed by NGFR and SORCS2. Signaling via NGFR and SORCS2 plays a role in synaptic plasticity and long-term depression (LTD). Binding to NGFR and SORCS2 promotes neuronal apoptosis. Promotes neuronal growth cone collapse. This is Neurotrophic factor BDNF precursor form from Homo sapiens (Human).